A 161-amino-acid chain; its full sequence is Urease accessory protein UreE (161 aa).

The protein belongs to the UreE family.

The protein localises to the cytoplasm. Involved in urease metallocenter assembly. Binds nickel. Probably functions as a nickel donor during metallocenter assembly. In Arthrobacter sp. (strain FB24), this protein is Urease accessory protein UreE.